The primary structure comprises 311 residues: Heparan sulfate glucosamine 3-O-sulfotransferase 1 (311 aa).

The signal sequence occupies residues 1–20 (MTLLLLGAVLLVAQPQLVPS). Residue asparagine 52 is glycosylated (N-linked (GlcNAc...) asparagine). Residues 68–72 (KGGTR), arginine 151, and serine 159 each bind 3'-phosphoadenylyl sulfate. Asparagine 196, asparagine 246, and asparagine 253 each carry an N-linked (GlcNAc...) asparagine glycan. A 3'-phosphoadenylyl sulfate-binding site is contributed by tyrosine 259. Residues cysteine 260 and cysteine 269 are joined by a disulfide bond. Residue 274-278 (KGRAH) participates in 3'-phosphoadenylyl sulfate binding.

The protein belongs to the sulfotransferase 1 family.

It is found in the golgi apparatus lumen. It catalyses the reaction alpha-D-glucosaminyl-[heparan sulfate](n) + 3'-phosphoadenylyl sulfate = 3-sulfo-alpha-D-glucosaminyl-[heparan sulfate](n) + adenosine 3',5'-bisphosphate + H(+). Functionally, sulfotransferase that utilizes 3'-phospho-5'-adenylyl sulfate (PAPS) to catalyze the transfer of a sulfo group to position 3 of glucosamine residues in heparan. Catalyzes the rate limiting step in the biosynthesis of heparan sulfate (HSact). This modification is a crucial step in the biosynthesis of anticoagulant heparan sulfate as it completes the structure of the antithrombin pentasaccharide binding site. This chain is Heparan sulfate glucosamine 3-O-sulfotransferase 1 (Hs3st1), found in Rattus norvegicus (Rat).